We begin with the raw amino-acid sequence, 442 residues long: Ankyrin repeat and MYND domain-containing protein 2 (442 aa).

ANK repeat units follow at residues 45–74, 79–108, and 159–188; these read NGMT…DVNC, HGYT…ETDV, and KLAG…NPLL. Zn(2+) contacts are provided by cysteine 320, cysteine 323, cysteine 332, cysteine 335, cysteine 341, cysteine 345, histidine 353, and cysteine 357. An MYND-type zinc finger spans residues 320–357; the sequence is CTTCGEKGASKRCSVCKMVIYCDQTCQKTHWFAHKKIC. Over residues 401 to 421 the composition is skewed to basic and acidic residues; it reads TRICQKNDNPKDSEEGEKESL. The tract at residues 401-442 is disordered; sequence TRICQKNDNPKDSEEGEKESLQSDAGLEGLQEAAVGPQVSEE.

As to quaternary structure, interacts with the retinal-specific guanylyl cyclase GC1.

The protein resides in the cell projection. It is found in the cilium. Its function is as follows. May be involved in the trafficking of signaling proteins to the cilia. In Bos taurus (Bovine), this protein is Ankyrin repeat and MYND domain-containing protein 2 (ANKMY2).